Reading from the N-terminus, the 142-residue chain is Large ribosomal subunit protein uL13 (142 aa).

This sequence belongs to the universal ribosomal protein uL13 family. As to quaternary structure, part of the 50S ribosomal subunit.

In terms of biological role, this protein is one of the early assembly proteins of the 50S ribosomal subunit, although it is not seen to bind rRNA by itself. It is important during the early stages of 50S assembly. In Halorhodospira halophila (strain DSM 244 / SL1) (Ectothiorhodospira halophila (strain DSM 244 / SL1)), this protein is Large ribosomal subunit protein uL13.